Here is a 122-residue protein sequence, read N- to C-terminus: Large ribosomal subunit protein uL14 (122 aa).

Belongs to the universal ribosomal protein uL14 family. In terms of assembly, part of the 50S ribosomal subunit. Forms a cluster with proteins L3 and L19. In the 70S ribosome, L14 and L19 interact and together make contacts with the 16S rRNA in bridges B5 and B8.

Binds to 23S rRNA. Forms part of two intersubunit bridges in the 70S ribosome. The sequence is that of Large ribosomal subunit protein uL14 from Salinibacter ruber (strain DSM 13855 / M31).